A 408-amino-acid chain; its full sequence is Broad specificity amino-acid racemase (408 aa).

An N-terminal signal peptide occupies residues 1–21 (MHKKTLLATLILGLLAGQAVA). A disulfide bond links Cys-70 and Cys-96. The Proton acceptor role is filled by Lys-74. The residue at position 74 (Lys-74) is an N6-(pyridoxal phosphate)lysine. Arg-173 is a binding site for substrate. The active-site Proton acceptor is Tyr-300. Met-348 contributes to the substrate binding site.

It belongs to the alanine racemase family. Bsr subfamily. Homodimer. Pyridoxal 5'-phosphate is required as a cofactor.

It is found in the periplasm. It carries out the reaction an L-alpha-amino acid = a D-alpha-amino acid. The enzyme catalyses L-lysine = D-lysine. It catalyses the reaction L-arginine = D-arginine. The catalysed reaction is L-alanine = D-alanine. It carries out the reaction L-serine = D-serine. The enzyme catalyses L-methionine = D-methionine. It catalyses the reaction L-leucine = D-leucine. The catalysed reaction is L-cysteine = D-cysteine. It carries out the reaction L-glutamine = D-glutamine. The enzyme catalyses L-asparagine = D-asparagine. It catalyses the reaction L-histidine = D-histidine. Its function is as follows. Amino-acid racemase able to utilize a broad range of substrates. Reversibly racemizes ten of the 19 natural chiral amino acids known, including both non-beta-branched aliphatic amino acids (Ala, Leu, Met, Ser, Cys, Gln and Asn) and positively charged amino acids (His, Lys and Arg). Is not active on negatively charged (Glu and Asp) or aromatic (Tyr, Trp and Phe) amino acids and displays minimal activity towards beta-branched aliphatic (Ile, Val and Thr) substrates. Enables bacteria to produce and release extracellular non-canonical D-amino acids (NCDAAs) that regulate diverse cellular processes. This is Broad specificity amino-acid racemase from Aeromonas hydrophila subsp. hydrophila (strain ATCC 7966 / DSM 30187 / BCRC 13018 / CCUG 14551 / JCM 1027 / KCTC 2358 / NCIMB 9240 / NCTC 8049).